A 295-amino-acid chain; its full sequence is 4-diphosphocytidyl-2-C-methyl-D-erythritol kinase (295 aa).

Lys-25 is an active-site residue. 108-118 (PMGSGLGGGSS) serves as a coordination point for ATP. The active site involves Asp-150.

The protein belongs to the GHMP kinase family. IspE subfamily.

It carries out the reaction 4-CDP-2-C-methyl-D-erythritol + ATP = 4-CDP-2-C-methyl-D-erythritol 2-phosphate + ADP + H(+). Its pathway is isoprenoid biosynthesis; isopentenyl diphosphate biosynthesis via DXP pathway; isopentenyl diphosphate from 1-deoxy-D-xylulose 5-phosphate: step 3/6. Functionally, catalyzes the phosphorylation of the position 2 hydroxy group of 4-diphosphocytidyl-2C-methyl-D-erythritol. The protein is 4-diphosphocytidyl-2-C-methyl-D-erythritol kinase of Pasteurella multocida (strain Pm70).